The primary structure comprises 520 residues: Cytochrome P450 monooxygenase vrtE (520 aa).

A helical membrane pass occupies residues Ala16–Leu36. N-linked (GlcNAc...) asparagine glycosylation is present at Asn137. Cys459 is a heme binding site.

The protein belongs to the cytochrome P450 family. It depends on heme as a cofactor.

The protein resides in the membrane. It functions in the pathway secondary metabolite biosynthesis; terpenoid biosynthesis. Cytochrome P450 monooxygenase; part of the gene cluster that mediates the biosynthesis of viridicatumtoxin, a tetracycline-like fungal meroterpenoid with a unique, fused spirobicyclic ring system. The first step of the pathway is the production of the malonamoyl-CoA starter unit for the polyketide synthase vrtA. The aldolase vrtJ may be involved in the synthesis of the malonamate substrate for malonamoyl-CoA synthetase vrtB. The polyketide synthase vrtA then may utilize the malonamoyl-CoA starter unit, followed by sequential condensation of eight malonyl-CoA units to form the polyketide backbone. The cyclization of the last ring could be mediated by the lactamase-like protein vrtG. The proposed post-PKS tailoring steps are a hydroxylation at C5 catalyzed the cytochrome P450 monooxygenase vrtE, a hydroxylation at C12a catalyzed by VrtH and/or VrtI, and an O-methylation by the O-methyltransferase vrtF. VrtC is then proposed to catalyze the transfer of a geranyl group synthesized by vrtD to the aromatic C ring of the tetracyclic polyketide intermediate of viridicatumtoxin to yield previridicatumtoxin. Finally, the cytochrome P450 monooxygenase vrtK catalyzes the spirocyclization of the geranyl moiety of previridicatumtoxin to afford viridicatumtoxin. The sequence is that of Cytochrome P450 monooxygenase vrtE from Penicillium aethiopicum.